A 343-amino-acid chain; its full sequence is Sodium/bile acid cotransporter 7-B (343 aa).

Over M1–K9 the chain is Cytoplasmic. A helical transmembrane segment spans residues E10–G30. Topologically, residues E31–K37 are extracellular. The helical transmembrane segment at P38–L58 threads the bilayer. Topologically, residues K59–K71 are cytoplasmic. A helical transmembrane segment spans residues L72–L92. At Q93 to P116 the chain is on the extracellular side. The helical transmembrane segment at P117–F137 threads the bilayer. Position 138 (N138) is a topological domain, cytoplasmic. Residues S139–G159 form a helical membrane-spanning segment. Residues S160 to S163 are Extracellular-facing. A helical membrane pass occupies residues V164–G184. The Cytoplasmic portion of the chain corresponds to Q185–P201. A helical membrane pass occupies residues F202–F222. The Extracellular portion of the chain corresponds to S223–L234. Residues V235–F255 form a helical membrane-spanning segment. Topologically, residues S256 to A270 are cytoplasmic. A helical transmembrane segment spans residues I271–F291. The Extracellular segment spans residues A292–S298. The chain crosses the membrane as a helical span at residues L299 to V319. At P320–L343 the chain is on the cytoplasmic side.

It belongs to the bile acid:sodium symporter (BASS) (TC 2.A.28) family.

It localises to the cell membrane. Its subcellular location is the endoplasmic reticulum membrane. The protein resides in the golgi apparatus membrane. In terms of biological role, involved in teeth and skeletal development. Has an essential role in the biosynthesis and trafficking of glycosaminoglycans and glycoproteins to produce a proper functioning extracellular matrix. Required for extracellular matrix mineralization. Also involved in the regulation of cellular calcium homeostasis. Does not show transport activity towards bile acids or steroid sulfates. This is Sodium/bile acid cotransporter 7-B (slc10a7-b) from Xenopus laevis (African clawed frog).